We begin with the raw amino-acid sequence, 506 residues long: ATP synthase subunit alpha (506 aa).

170 to 177 serves as a coordination point for ATP; that stretch reads GDRQTGKT.

The protein belongs to the ATPase alpha/beta chains family. In terms of assembly, F-type ATPases have 2 components, CF(1) - the catalytic core - and CF(0) - the membrane proton channel. CF(1) has five subunits: alpha(3), beta(3), gamma(1), delta(1), epsilon(1). CF(0) has four main subunits: a(1), b(1), b'(1) and c(9-12).

Its subcellular location is the cellular thylakoid membrane. The catalysed reaction is ATP + H2O + 4 H(+)(in) = ADP + phosphate + 5 H(+)(out). Produces ATP from ADP in the presence of a proton gradient across the membrane. The alpha chain is a regulatory subunit. In Synechococcus sp. (strain JA-3-3Ab) (Cyanobacteria bacterium Yellowstone A-Prime), this protein is ATP synthase subunit alpha.